The chain runs to 287 residues: Phosphatidylserine decarboxylase proenzyme (287 aa).

Active-site charge relay system; for autoendoproteolytic cleavage activity residues include Asp89, His146, and Ser252. The active-site Schiff-base intermediate with substrate; via pyruvic acid; for decarboxylase activity is the Ser252. At Ser252 the chain carries Pyruvic acid (Ser); by autocatalysis.

Belongs to the phosphatidylserine decarboxylase family. PSD-B subfamily. Prokaryotic type I sub-subfamily. Heterodimer of a large membrane-associated beta subunit and a small pyruvoyl-containing alpha subunit. Pyruvate is required as a cofactor. In terms of processing, is synthesized initially as an inactive proenzyme. Formation of the active enzyme involves a self-maturation process in which the active site pyruvoyl group is generated from an internal serine residue via an autocatalytic post-translational modification. Two non-identical subunits are generated from the proenzyme in this reaction, and the pyruvate is formed at the N-terminus of the alpha chain, which is derived from the carboxyl end of the proenzyme. The autoendoproteolytic cleavage occurs by a canonical serine protease mechanism, in which the side chain hydroxyl group of the serine supplies its oxygen atom to form the C-terminus of the beta chain, while the remainder of the serine residue undergoes an oxidative deamination to produce ammonia and the pyruvoyl prosthetic group on the alpha chain. During this reaction, the Ser that is part of the protease active site of the proenzyme becomes the pyruvoyl prosthetic group, which constitutes an essential element of the active site of the mature decarboxylase.

It localises to the cell membrane. It carries out the reaction a 1,2-diacyl-sn-glycero-3-phospho-L-serine + H(+) = a 1,2-diacyl-sn-glycero-3-phosphoethanolamine + CO2. It participates in phospholipid metabolism; phosphatidylethanolamine biosynthesis; phosphatidylethanolamine from CDP-diacylglycerol: step 2/2. Catalyzes the formation of phosphatidylethanolamine (PtdEtn) from phosphatidylserine (PtdSer). The protein is Phosphatidylserine decarboxylase proenzyme of Shewanella woodyi (strain ATCC 51908 / MS32).